The primary structure comprises 392 residues: Bifunctional enzyme Fae/Hps (392 aa).

A formaldehyde-activating enzyme region spans residues 1-161; the sequence is MFQIGEALMG…EESNKSTHAI (161 aa). His17 (proton donor) is an active-site residue. Residues Asp19, Leu48, Lys66, Thr68, and Gln83 each coordinate substrate. The segment at 162 to 392 is 3-hexulose-6-phosphate synthase; it reads MGFKVTRLWD…IDQFRVMTDF (231 aa).

It in the N-terminal section; belongs to the formaldehyde-activating enzyme family. The protein in the C-terminal section; belongs to the HPS/KGPDC family. HPS subfamily.

It catalyses the reaction 5,6,7,8-tetrahydromethanopterin + formaldehyde = 5,10-methylenetetrahydromethanopterin + H2O. The enzyme catalyses D-ribulose 5-phosphate + formaldehyde = D-arabino-hex-3-ulose 6-phosphate. Its pathway is carbohydrate biosynthesis; D-ribose 5-phosphate biosynthesis. In terms of biological role, catalyzes the condensation of formaldehyde with tetrahydromethanopterin (H(4)MPT) to 5,10-methylenetetrahydromethanopterin. Catalyzes the reversible formation of ribulose-5-phosphate and formaldehyde from 3-hexulose-6-phosphate. The protein is Bifunctional enzyme Fae/Hps of Methanosarcina acetivorans (strain ATCC 35395 / DSM 2834 / JCM 12185 / C2A).